The sequence spans 182 residues: Large ribosomal subunit protein uL10 (182 aa).

It belongs to the universal ribosomal protein uL10 family. Part of the ribosomal stalk of the 50S ribosomal subunit. The N-terminus interacts with L11 and the large rRNA to form the base of the stalk. The C-terminus forms an elongated spine to which L12 dimers bind in a sequential fashion forming a multimeric L10(L12)X complex.

Forms part of the ribosomal stalk, playing a central role in the interaction of the ribosome with GTP-bound translation factors. In Leptothrix cholodnii (strain ATCC 51168 / LMG 8142 / SP-6) (Leptothrix discophora (strain SP-6)), this protein is Large ribosomal subunit protein uL10.